The primary structure comprises 432 residues: 3-phosphoshikimate 1-carboxyvinyltransferase (432 aa).

Residues lysine 23, serine 24, and arginine 28 each coordinate 3-phosphoshikimate. Lysine 23 is a phosphoenolpyruvate binding site. Phosphoenolpyruvate contacts are provided by glycine 95 and arginine 123. Residues serine 167, glutamine 169, aspartate 317, and lysine 344 each contribute to the 3-phosphoshikimate site. Glutamine 169 provides a ligand contact to phosphoenolpyruvate. Catalysis depends on aspartate 317, which acts as the Proton acceptor. The phosphoenolpyruvate site is built by arginine 348 and arginine 390.

Belongs to the EPSP synthase family. In terms of assembly, monomer.

Its subcellular location is the cytoplasm. It catalyses the reaction 3-phosphoshikimate + phosphoenolpyruvate = 5-O-(1-carboxyvinyl)-3-phosphoshikimate + phosphate. It functions in the pathway metabolic intermediate biosynthesis; chorismate biosynthesis; chorismate from D-erythrose 4-phosphate and phosphoenolpyruvate: step 6/7. Catalyzes the transfer of the enolpyruvyl moiety of phosphoenolpyruvate (PEP) to the 5-hydroxyl of shikimate-3-phosphate (S3P) to produce enolpyruvyl shikimate-3-phosphate and inorganic phosphate. This Staphylococcus aureus (strain JH9) protein is 3-phosphoshikimate 1-carboxyvinyltransferase.